We begin with the raw amino-acid sequence, 452 residues long: Mitochondrial import inner membrane translocase subunit TIM44 (452 aa).

Position 128 is a phosphothreonine (Thr128). 166-173 (GGEKLGRT) contributes to the ATP binding site. At Ser180 the chain carries Phosphoserine. Position 217 is an N6-succinyllysine (Lys217).

It belongs to the Tim44 family. In terms of assembly, probable component of the PAM complex at least composed of a mitochondrial HSP70 protein, GRPEL1 or GRPEL2, TIMM44, TIMM16/PAM16 and TIMM14/DNAJC19. The complex interacts with the TIMM23 component of the TIM23 complex. Interacts with SLC25A4/ANT1 and SLC25A5/ANT2; leading to inhibit the presequence translocase TIMM23, thereby promoting stabilization of PINK1.

Its subcellular location is the mitochondrion inner membrane. It localises to the mitochondrion matrix. Essential component of the PAM complex, a complex required for the translocation of transit peptide-containing proteins from the inner membrane into the mitochondrial matrix in an ATP-dependent manner. Recruits mitochondrial HSP70 to drive protein translocation into the matrix using ATP as an energy source. The polypeptide is Mitochondrial import inner membrane translocase subunit TIM44 (TIMM44) (Homo sapiens (Human)).